A 111-amino-acid chain; its full sequence is uncharacterized protein (111 aa).

The disordered stretch occupies residues 66–94 (PVPTATPSLPRSGFTSSAKKIKESRKQKS). Over residues 70–83 (ATPSLPRSGFTSSA) the composition is skewed to polar residues.

Its subcellular location is the plastid. The protein resides in the chloroplast. This is an uncharacterized protein from Chlamydomonas reinhardtii (Chlamydomonas smithii).